We begin with the raw amino-acid sequence, 175 residues long: Peptide deformylase (175 aa).

The Fe cation site is built by C98 and H140. Residue E141 is part of the active site. H144 lines the Fe cation pocket.

It belongs to the polypeptide deformylase family. Fe(2+) serves as cofactor.

It carries out the reaction N-terminal N-formyl-L-methionyl-[peptide] + H2O = N-terminal L-methionyl-[peptide] + formate. Removes the formyl group from the N-terminal Met of newly synthesized proteins. Requires at least a dipeptide for an efficient rate of reaction. N-terminal L-methionine is a prerequisite for activity but the enzyme has broad specificity at other positions. The polypeptide is Peptide deformylase (Bradyrhizobium sp. (strain ORS 278)).